The following is a 471-amino-acid chain: Glutamate--tRNA ligase (471 aa).

A 'HIGH' region motif is present at residues 9 to 19 (PSPTGYLHVGG). Positions 98, 100, 125, and 127 each coordinate Zn(2+). The 'KMSKS' region motif lies at 237–241 (KLSKR). Lys-240 lines the ATP pocket.

This sequence belongs to the class-I aminoacyl-tRNA synthetase family. Glutamate--tRNA ligase type 1 subfamily. Monomer. It depends on Zn(2+) as a cofactor.

It localises to the cytoplasm. The enzyme catalyses tRNA(Glu) + L-glutamate + ATP = L-glutamyl-tRNA(Glu) + AMP + diphosphate. Its function is as follows. Catalyzes the attachment of glutamate to tRNA(Glu) in a two-step reaction: glutamate is first activated by ATP to form Glu-AMP and then transferred to the acceptor end of tRNA(Glu). In Salmonella choleraesuis (strain SC-B67), this protein is Glutamate--tRNA ligase.